The primary structure comprises 107 residues: Pathogenesis-related protein PR-4 (107 aa).

A Barwin domain is found at 1-107; it reads QNINWDLRTA…VNYDFVDCGD (107 aa). 3 disulfide bridges follow: Cys-14–Cys-46, Cys-35–Cys-69, and Cys-49–Cys-105.

As to expression, preferentially expressed in the tissue surrounding the abscission zone of fruitlets.

The protein localises to the secreted. It is found in the cell wall. Its function is as follows. May be involved in protecting plant tissues from pathogen infection. In Prunus persica (Peach), this protein is Pathogenesis-related protein PR-4.